The sequence spans 413 residues: Transcription factor E2F4 (413 aa).

Residues 1–20 (MAEAGPQAPPPPGTPSRHEK) are disordered. At alanine 2 the chain carries N-acetylalanine. The DNA-binding element occupies 16 to 85 (SRHEKSLGLL…KNSIQWKGVG (70 aa)). The tract at residues 43 to 65 (LKLAADTLAVRQKRRIYDITNVL) is leucine-zipper. The short motif at 48–85 (DTLAVRQKRRIYDITNVLEGIGLIEKKSKNSIQWKGVG) is the DEF box element. A dimerization region spans residues 86-181 (PGCNTREIAD…GLNGQKKYQI (96 aa)). Residues 211–340 (PPEDLLQSPS…PSTSFEPIKA (130 aa)) are disordered. 2 stretches are compositionally biased toward polar residues: residues 234–249 (AQSQEASRPNSPQLTP) and 293–306 (TLDTRPLQSSALLD). Over residues 307-327 (SSSSSSSSSSSSSNSNSSSSS) the composition is skewed to low complexity. A transactivation region spans residues 337–413 (PIKADPTGVL…DLFDVPVLNL (77 aa)). Serine 384 bears the Phosphoserine mark. Positions 389-392 (DHDY) match the HCFC1-binding-motif (HBM) motif. The tract at residues 390 to 407 (HDYIYNLDESEGVCDLFD) is interaction with RBL1 and RBL2.

It belongs to the E2F/DP family. Component of the DRTF1/E2F transcription factor complex. Binds cooperatively with TFDP1/Dp-1 to E2F sites. The E2F4/TFDP1 dimer interacts preferentially with pocket protein RBL1, which inhibits the E2F transactivation domain. Lower affinity interaction has been found with retinoblastoma protein RB1. Interacts with TRRAP, which probably mediates its interaction with histone acetyltransferase complexes, leading to transcription activation. Interacts with HCFC1. Component of the DREAM complex (also named LINC complex) at least composed of E2F4, E2F5, LIN9, LIN37, LIN52, LIN54, MYBL1, MYBL2, RBL1, RBL2, RBBP4, TFDP1 and TFDP2. The complex exists in quiescent cells where it represses cell cycle-dependent genes. It dissociates in S phase when LIN9, LIN37, LIN52 and LIN54 form a subcomplex that binds to MYBL2. Interacts with PML (isoform PML-1, isoform PML-2, isoform PML-3, isoform PML-4 and isoform PML-5). Interacts with CEBPA (when phosphorylated). Differentially phosphorylated in vivo. In terms of tissue distribution, found in all tissue examined including heart, brain, placenta, lung, liver, skeletal muscle, kidney and pancreas.

It localises to the nucleus. In terms of biological role, transcription activator that binds DNA cooperatively with DP proteins through the E2 recognition site, 5'-TTTC[CG]CGC-3' found in the promoter region of a number of genes whose products are involved in cell cycle regulation or in DNA replication. The DRTF1/E2F complex functions in the control of cell-cycle progression from G1 to S phase. E2F4 binds with high affinity to RBL1 and RBL2. In some instances can also bind RB1. Specifically required for multiciliate cell differentiation: together with MCIDAS and E2F5, binds and activate genes required for centriole biogenesis. This chain is Transcription factor E2F4 (E2F4), found in Homo sapiens (Human).